The primary structure comprises 317 residues: MPIHLECMSHTPLHGYFDPAPEVVAEVERVQRVARERVDAFDPELVIVFAPDHYNGFFYDVMPQFCIGVRATAIGDFNSAAGPLPVARDVALALADAALASDIDVAVSYRMQVDHGCAQALDVLTGGIDRYPVVPVFINSVAPPMASCRRARLLGDAIGRAAARMNRRVLLIGSGGMSHEPPVPEIAAADDVVAERLIAGRNPSPESRNARQSRTIAAAKAFAAGDSRLHPLNPAWDRALLELLERGEIAAADGLTNEAITRDAGKSAHEIRTWVAAFGALAASGPYAASIDYYRAIPEWIAGFGAMHAHEQTLSRR.

The active-site Proton donor is His-115. His-179 serves as the catalytic Proton acceptor.

It belongs to the LigB/MhpB extradiol dioxygenase family. As to quaternary structure, homotetramer. Requires Fe(2+) as cofactor.

It carries out the reaction 3-(2,3-dihydroxyphenyl)propanoate + O2 = (2Z,4E)-2-hydroxy-6-oxonona-2,4-dienedioate + H(+). The enzyme catalyses (2E)-3-(2,3-dihydroxyphenyl)prop-2-enoate + O2 = (2Z,4E,7E)-2-hydroxy-6-oxonona-2,4,7-trienedioate + H(+). The protein operates within aromatic compound metabolism; 3-phenylpropanoate degradation. Catalyzes the non-heme iron(II)-dependent oxidative cleavage of 2,3-dihydroxyphenylpropionic acid and 2,3-dihydroxicinnamic acid into 2-hydroxy-6-ketononadienedioate and 2-hydroxy-6-ketononatrienedioate, respectively. This is 2,3-dihydroxyphenylpropionate/2,3-dihydroxicinnamic acid 1,2-dioxygenase from Paraburkholderia phymatum (strain DSM 17167 / CIP 108236 / LMG 21445 / STM815) (Burkholderia phymatum).